The chain runs to 494 residues: Cytochrome P450 2A10 (494 aa).

An N6-acetyllysine modification is found at Lys379. Cys439 contacts heme.

It belongs to the cytochrome P450 family. The cofactor is heme. Expressed in liver and lung as well as in nasal tissues.

It localises to the endoplasmic reticulum membrane. Its subcellular location is the microsome membrane. It catalyses the reaction an organic molecule + reduced [NADPH--hemoprotein reductase] + O2 = an alcohol + oxidized [NADPH--hemoprotein reductase] + H2O + H(+). In terms of biological role, catalyzes the oxygenation of a variety of substrates, including ethanol and procarcinogens such as N-nitrosodiethylamine and phenacetin. Exhibits a high coumarin 7-hydroxylase activity. Converts also testosterone to androstenedione. The protein is Cytochrome P450 2A10 (CYP2A10) of Oryctolagus cuniculus (Rabbit).